The primary structure comprises 699 residues: 4-alpha-glucanotransferase (699 aa).

It belongs to the disproportionating enzyme family.

It localises to the cytoplasm. The enzyme catalyses Transfers a segment of a (1-&gt;4)-alpha-D-glucan to a new position in an acceptor, which may be glucose or a (1-&gt;4)-alpha-D-glucan.. This chain is 4-alpha-glucanotransferase (malQ), found in Haemophilus influenzae (strain ATCC 51907 / DSM 11121 / KW20 / Rd).